A 55-amino-acid chain; its full sequence is Photosystem II reaction center protein K (55 aa).

A propeptide spanning residues 1 to 18 (MFNIYLENAFYLNGITFA) is cleaved from the precursor. A helical transmembrane segment spans residues 26–46 (IFDPIVDVMPIIPLFFFLLAF).

This sequence belongs to the PsbK family. As to quaternary structure, PSII is composed of 1 copy each of membrane proteins PsbA, PsbB, PsbC, PsbD, PsbE, PsbF, PsbH, PsbI, PsbJ, PsbK, PsbL, PsbM, PsbT, PsbX, PsbY, PsbZ, Psb30/Ycf12, at least 3 peripheral proteins of the oxygen-evolving complex and a large number of cofactors. It forms dimeric complexes.

It localises to the plastid. The protein resides in the chloroplast thylakoid membrane. In terms of biological role, one of the components of the core complex of photosystem II (PSII). PSII is a light-driven water:plastoquinone oxidoreductase that uses light energy to abstract electrons from H(2)O, generating O(2) and a proton gradient subsequently used for ATP formation. It consists of a core antenna complex that captures photons, and an electron transfer chain that converts photonic excitation into a charge separation. The protein is Photosystem II reaction center protein K of Marchantia polymorpha (Common liverwort).